Reading from the N-terminus, the 349-residue chain is Phenylalanine--tRNA ligase alpha subunit (349 aa).

Glutamate 262 serves as a coordination point for Mg(2+).

Belongs to the class-II aminoacyl-tRNA synthetase family. Phe-tRNA synthetase alpha subunit type 1 subfamily. As to quaternary structure, tetramer of two alpha and two beta subunits. It depends on Mg(2+) as a cofactor.

Its subcellular location is the cytoplasm. The enzyme catalyses tRNA(Phe) + L-phenylalanine + ATP = L-phenylalanyl-tRNA(Phe) + AMP + diphosphate + H(+). This Sorangium cellulosum (strain So ce56) (Polyangium cellulosum (strain So ce56)) protein is Phenylalanine--tRNA ligase alpha subunit.